A 76-amino-acid chain; its full sequence is Tautomerase PptA (76 aa).

Pro2 functions as the Proton acceptor; via imino nitrogen in the catalytic mechanism.

It belongs to the 4-oxalocrotonate tautomerase family. PptA subfamily. Homodimer.

It localises to the cytoplasm. The polypeptide is Tautomerase PptA (Pectobacterium atrosepticum (strain SCRI 1043 / ATCC BAA-672) (Erwinia carotovora subsp. atroseptica)).